The chain runs to 623 residues: Leucine aminopeptidase 2 (623 aa).

Residues 136–138 (QCQ) and 273–278 (PYGGME) each bind a peptide. H302 lines the Zn(2+) pocket. E303 acts as the Proton acceptor in catalysis. H306 and E325 together coordinate Zn(2+). The active-site Proton donor is the Y390.

It belongs to the peptidase M1 family. Zn(2+) is required as a cofactor.

Its subcellular location is the cytoplasm. The protein localises to the nucleus. It carries out the reaction an epoxide + H2O = an ethanediol. Aminopeptidase that preferentially cleaves di- and tripeptides. Also has low epoxide hydrolase activity (in vitro). Can hydrolyze the epoxide leukotriene LTA(4) but it forms preferentially 5,6-dihydroxy-7,9,11,14-eicosatetraenoic acid rather than the cytokine leukotriene B(4) as the product compared to the homologous mammalian enzyme (in vitro). This is Leucine aminopeptidase 2 from Phaeosphaeria nodorum (strain SN15 / ATCC MYA-4574 / FGSC 10173) (Glume blotch fungus).